A 166-amino-acid chain; its full sequence is EndA-like protein (166 aa).

Belongs to the tRNA-intron endonuclease family. Archaeal short subfamily.

The sequence is that of EndA-like protein from Methanopyrus kandleri (strain AV19 / DSM 6324 / JCM 9639 / NBRC 100938).